A 400-amino-acid polypeptide reads, in one-letter code: Renin (400 aa).

The signal sequence occupies residues 1–17; the sequence is MPLWGLLLALWGCSTFS. Positions 18-59 are cleaved as a propeptide — activation peptide; that stretch reads LPADTAAFRRIFLKKMPSVRESLKERGVDMAQLGAEWSQLTK. A glycan (N-linked (GlcNAc...) asparagine) is linked at Asn-65. The Peptidase A1 domain maps to 80 to 397; that stretch reads YYGEIGIGTP…DRRNNRIGFA (318 aa). Residue Asp-98 is part of the active site. An intrachain disulfide couples Cys-111 to Cys-118. The N-linked (GlcNAc...) asparagine glycan is linked to Asn-135. Cys-277 and Cys-281 are disulfide-bonded. The active site involves Asp-286. Residues Cys-320 and Cys-356 are joined by a disulfide bond. The N-linked (GlcNAc...) asparagine glycan is linked to Asn-353.

This sequence belongs to the peptidase A1 family. In terms of assembly, interacts with ATP6AP2. Kidney.

The protein resides in the secreted. Its subcellular location is the membrane. It catalyses the reaction Cleavage of Leu-|-Xaa bond in angiotensinogen to generate angiotensin I.. Its activity is regulated as follows. Interaction with ATP6AP2 results in a 5-fold increased efficiency in angiotensinogen processing. Its function is as follows. Renin is a highly specific endopeptidase, whose only known function is to generate angiotensin I from angiotensinogen in the plasma, initiating a cascade of reactions that produce an elevation of blood pressure and increased sodium retention by the kidney. This Ovis aries (Sheep) protein is Renin (REN).